The sequence spans 207 residues: Ribonuclease HII (207 aa).

Residues 12–201 (DLVAGVDEVG…VRAAWEAREG (190 aa)) form the RNase H type-2 domain. A divalent metal cation is bound by residues Asp18, Glu19, and Asp110.

It belongs to the RNase HII family. Mn(2+) is required as a cofactor. Mg(2+) serves as cofactor.

The protein localises to the cytoplasm. It catalyses the reaction Endonucleolytic cleavage to 5'-phosphomonoester.. Functionally, endonuclease that specifically degrades the RNA of RNA-DNA hybrids. The sequence is that of Ribonuclease HII from Pseudomonas putida (strain W619).